We begin with the raw amino-acid sequence, 238 residues long: Probable transcriptional regulatory protein VS_II1504 (238 aa).

This sequence belongs to the TACO1 family.

It localises to the cytoplasm. The polypeptide is Probable transcriptional regulatory protein VS_II1504 (Vibrio atlanticus (strain LGP32) (Vibrio splendidus (strain Mel32))).